Reading from the N-terminus, the 132-residue chain is U10-hexatoxin-Hi1a (132 aa).

A signal peptide spans 1–20 (MKGFIVFSLSLCLVFTVCLA). The propeptide occupies 21 to 30 (EDELMKEAVR).

In terms of processing, contains 5 disulfide bonds. In terms of tissue distribution, expressed by the venom gland.

It is found in the secreted. In terms of biological role, probable ion channel inhibitor. In Hadronyche infensa (Fraser island funnel-web spider), this protein is U10-hexatoxin-Hi1a.